A 455-amino-acid polypeptide reads, in one-letter code: Nucleolar protein 12 (455 aa).

Disordered stretches follow at residues 1-104 (MSSF…ENEN) and 117-142 (QNEE…RTKA). A compositionally biased stretch (basic and acidic residues) spans 24-37 (NTRDGPVSKDELVK). Over residues 51–66 (PKQQTNENESTLNQSA) the composition is skewed to polar residues. Acidic residues predominate over residues 68–91 (ESDEEEEEYNDESNEGDDSDDAEQ). Over residues 124–141 (SKESSEAKSSKVAEERTK) the composition is skewed to basic and acidic residues. RRM domains lie at 160–258 (RTVF…HVSH) and 266–351 (RTIF…RAKS). Disordered stretches follow at residues 333–402 (LETG…RSTV) and 420–455 (AIKG…MNKV). Residues 339–348 (KKGRKLRISR) are compositionally biased toward basic residues. Polar residues predominate over residues 349–363 (AKSNAKPSLMSPNHF). Residues 425-438 (KGSKKGKKVKKPRI) are compositionally biased toward basic residues. Residues 439-455 (RERSTKFKEERKTMNKV) show a composition bias toward basic and acidic residues.

Belongs to the RRM RBM34 family.

The protein localises to the nucleus. It is found in the nucleolus. In terms of biological role, involved in pre-25S rRNA processing. The protein is Nucleolar protein 12 (NOP12) of Candida albicans (strain SC5314 / ATCC MYA-2876) (Yeast).